The sequence spans 227 residues: Phosphoglycolate phosphatase (227 aa).

The active-site Nucleophile is Asp-11. Positions 11 and 13 each coordinate Mg(2+). Lys-155 contributes to the substrate binding site. Positions 178 and 182 each coordinate Mg(2+).

Belongs to the archaeal SPP-like hydrolase family. It depends on Mg(2+) as a cofactor.

The catalysed reaction is 2-phosphoglycolate + H2O = glycolate + phosphate. Functionally, catalyzes the dephosphorylation of 2-phosphoglycolate. The sequence is that of Phosphoglycolate phosphatase from Haloarcula marismortui (strain ATCC 43049 / DSM 3752 / JCM 8966 / VKM B-1809) (Halobacterium marismortui).